Reading from the N-terminus, the 285-residue chain is Polyamine aminopropyltransferase (285 aa).

Residues 2–237 (EFWFSELHSP…GYWLFGFASK (236 aa)) form the PABS domain. Residue glutamine 31 participates in S-methyl-5'-thioadenosine binding. A spermidine-binding site is contributed by aspartate 86. S-methyl-5'-thioadenosine-binding positions include glutamate 106 and 137 to 138 (DA). The active-site Proton acceptor is the aspartate 155.

Belongs to the spermidine/spermine synthase family. As to quaternary structure, homodimer or homotetramer.

It is found in the cytoplasm. It catalyses the reaction S-adenosyl 3-(methylsulfanyl)propylamine + putrescine = S-methyl-5'-thioadenosine + spermidine + H(+). It functions in the pathway amine and polyamine biosynthesis; spermidine biosynthesis; spermidine from putrescine: step 1/1. Its function is as follows. Catalyzes the irreversible transfer of a propylamine group from the amino donor S-adenosylmethioninamine (decarboxy-AdoMet) to putrescine (1,4-diaminobutane) to yield spermidine. The chain is Polyamine aminopropyltransferase from Lachnospira eligens (strain ATCC 27750 / DSM 3376 / VPI C15-48 / C15-B4) (Eubacterium eligens).